A 415-amino-acid chain; its full sequence is Serine hydroxymethyltransferase 1 (415 aa).

Residues Leu-117 and 121–123 (GHL) contribute to the (6S)-5,6,7,8-tetrahydrofolate site. Lys-225 carries the N6-(pyridoxal phosphate)lysine modification. A (6S)-5,6,7,8-tetrahydrofolate-binding site is contributed by 349–351 (SPF).

The protein belongs to the SHMT family. Homodimer. Pyridoxal 5'-phosphate is required as a cofactor.

Its subcellular location is the cytoplasm. It carries out the reaction (6R)-5,10-methylene-5,6,7,8-tetrahydrofolate + glycine + H2O = (6S)-5,6,7,8-tetrahydrofolate + L-serine. The protein operates within one-carbon metabolism; tetrahydrofolate interconversion. It functions in the pathway amino-acid biosynthesis; glycine biosynthesis; glycine from L-serine: step 1/1. Functionally, catalyzes the reversible interconversion of serine and glycine with tetrahydrofolate (THF) serving as the one-carbon carrier. This reaction serves as the major source of one-carbon groups required for the biosynthesis of purines, thymidylate, methionine, and other important biomolecules. Also exhibits THF-independent aldolase activity toward beta-hydroxyamino acids, producing glycine and aldehydes, via a retro-aldol mechanism. The polypeptide is Serine hydroxymethyltransferase 1 (Sulfurimonas denitrificans (strain ATCC 33889 / DSM 1251) (Thiomicrospira denitrificans (strain ATCC 33889 / DSM 1251))).